Consider the following 817-residue polypeptide: Probable inorganic carbon transporter subunit DabA (817 aa).

Positions 301, 303, 491, and 506 each coordinate Zn(2+). Disordered regions lie at residues N598–A617 and G794–S817.

It belongs to the inorganic carbon transporter (TC 9.A.2) DabA family. As to quaternary structure, forms a complex with DabB. Zn(2+) serves as cofactor.

The protein localises to the cell inner membrane. In terms of biological role, part of an energy-coupled inorganic carbon pump. This chain is Probable inorganic carbon transporter subunit DabA, found in Salinibacter ruber (strain DSM 13855 / M31).